The following is a 1076-amino-acid chain: Nuclear factor of activated T-cells, cytoplasmic 3 (1076 aa).

N-acetylthreonine is present on T2. The tract at residues 110–115 (PSIQIT) is calcineurin-binding. Residues 206–307 (LGSPLTSPGG…PGHSPRGSVT (102 aa)) form a disordered region. Repeat copies occupy residues 208–224 (SPLT…PGEE) and 237–253 (SPRQ…ITDE). Residues 208–309 (SPLTSPGGSP…HSPRGSVTED (102 aa)) form a 3 X SP repeats region. Residues 237 to 254 (SPRQSPCHSPRSSITDEN) are compositionally biased toward polar residues. Over residues 257–271 (SPRPASGPSSRPTSP) the composition is skewed to low complexity. The Nuclear localization signal motif lies at 274–276 (KRR). The stretch at 293–309 (SPVPSPGHSPRGSVTED) is repeat 3. S345 carries the phosphoserine modification. Residues 359–390 (CSDDQGSLSPSRETSVDDGLGSQYPLKKDSSG) are disordered. Residues 362–371 (DQGSLSPSRE) are compositionally biased toward polar residues. Phosphoserine is present on S373. Residues 416 to 597 (SSLPPLDWPL…IPVECSQRSA (182 aa)) form the RHD domain. A DNA-binding region spans residues 445 to 452 (RAHYETEG). Positions 687–689 (KRK) match the Nuclear localization signal motif. 2 disordered regions span residues 700–744 (PVLM…ALSA) and 863–987 (GHLL…GGLS). Over residues 713-722 (LSSVPSLPVP) the composition is skewed to low complexity. Composition is skewed to polar residues over residues 724–734 (SAQTQRPSSDT) and 888–911 (SAGQ…SHLQ). Composition is skewed to low complexity over residues 917–939 (PSHP…SSPI) and 946–965 (QLQS…SPSP). The span at 970 to 981 (HSGQHSTQAQST) shows a compositional bias: polar residues. A Nuclear export signal motif is present at residues 1032-1041 (TLDDVNEIIG). The tract at residues 1049-1076 (VSQGPEVIRDAPLPGPESPDVMSSNSAQ) is disordered. Phosphoserine is present on S1066.

As to quaternary structure, NFATC proteins bind to DNA as monomers. Member of the multicomponent NFATC transcription complex that consists of at least two components, a pre-existing cytoplasmic component NFATC2 and an inducible nuclear component NFATC1. Other members such as NFATC4, or members of the activating protein-1 family, MAF, GATA4 and Cbp/p300 can also bind the complex. Component of a promoter-binding complex composed of STAT3, NFATC3 and NFATC4; complex formation is enhanced by calcineurin. Interacts with TRIM17; this interaction prevents NFATC3 nuclear localization. Interacts with and ubiquitinated by STUB1/CHIP; HSPA1A/HSP70 is required as a co-chaperone. Phosphorylated by NFATC-kinase; dephosphorylated by calcineurin. In terms of processing, ubiquitinated by STUB1/CHIP, leading to proteasomal degradation. In terms of tissue distribution, expressed in cardiomyocytes (at protein level).

The protein localises to the cytoplasm. Its subcellular location is the nucleus. In terms of biological role, acts as a regulator of transcriptional activation. Binds to the TNFSF11/RANKL promoter region and promotes TNFSF11 transcription. Binding to the TNFSF11 promoter region is increased by high levels of Ca(2+) which induce NFATC3 expression and may lead to regulation of TNFSF11 expression in osteoblasts. Plays a role in promoting mesenteric arterial wall remodeling in response to the intermittent hypoxia-induced increase in EDN1 and ROCK signaling. As a result NFATC3 colocalizes with F-actin filaments, translocates to the nucleus and promotes transcription of the smooth muscle hypertrophy and differentiation marker ACTA2. Promotes lipopolysaccharide-induced apoptosis and hypertrophy in cardiomyocytes. Following JAK/STAT signaling activation and as part of a complex with NFATC4 and STAT3, binds to the alpha-beta E4 promoter region of CRYAB and activates transcription in cardiomyocytes. In conjunction with NFATC4, involved in embryonic heart development via maintenance of cardiomyocyte survival, proliferation and differentiation. Plays a role in the inducible expression of cytokine genes in T-cells, especially in the induction of the IL-2. Required for thymocyte maturation during DN3 to DN4 transition and during positive selection. Positively regulates macrophage-derived polymicrobial clearance, via binding to the promoter region and promoting transcription of NOS2 resulting in subsequent generation of nitric oxide. Involved in Ca(2+)-mediated transcriptional responses upon Ca(2+) influx via ORAI1 CRAC channels. The polypeptide is Nuclear factor of activated T-cells, cytoplasmic 3 (Rattus norvegicus (Rat)).